The following is a 416-amino-acid chain: MAGFVPLLLLLLPAGPTWGSKEKCLTKMYTTSGECCKACNLGEGVVQPCGVNQTVCEPCLDSVTYSDTVSATEPCKPCTQCVGLHSMSAPCVESDDAVCRCAYGYFQDELSGSCKECSICEVGFGLMFPCRDSQDTVCEECPEGTFSDEANFVDPCLPCTICEENEVMVKECTATSDAECRDLHPRWTTHTPSLAGSDSPEPITRDPFNTEGMATTLADIVTTVMGSSQPVVSRGTADNLIPVYCSILAAVVVGLVAYIAFKRWNSCKQNKQGANNRPVNQTPSPEGEKLHSDSGISVDSQSLHDQQPPNQSTQGPAPKGDGSLYASLPPSKQEEVEKLLSSSAEETWRQLAGELGYKEDLIDCFTREESPARALLADWSAKETATLDALLVALRKIQRGDIAESLYSESTATSPV.

The signal sequence occupies residues 1–19 (MAGFVPLLLLLLPAGPTWG). TNFR-Cys repeat units lie at residues 23 to 57 (KCLT…TVCE), 58 to 99 (PCLD…DAVC), 100 to 138 (RCAY…DTVC), and 140 to 180 (ECPE…DAEC). Intrachain disulfides connect Cys-24/Cys-35, Cys-36/Cys-49, Cys-39/Cys-56, Cys-59/Cys-75, Cys-78/Cys-91, Cys-81/Cys-99, Cys-101/Cys-114, Cys-117/Cys-130, Cys-120/Cys-138, Cys-141/Cys-156, Cys-159/Cys-172, and Cys-162/Cys-180. Over 29–239 (YTTSGECCKA…PVVSRGTADN (211 aa)) the chain is Extracellular. Residue Asn-52 is glycosylated (N-linked (GlcNAc...) asparagine). A helical membrane pass occupies residues 240–261 (LIPVYCSILAAVVVGLVAYIAF). At 262 to 416 (KRWNSCKQNK…YSESTATSPV (155 aa)) the chain is on the cytoplasmic side. Composition is skewed to polar residues over residues 270-284 (NKQG…QTPS) and 294-315 (SGIS…STQG). The interval 270-328 (NKQGANNRPVNQTPSPEGEKLHSDSGISVDSQSLHDQQPPNQSTQGPAPKGDGSLYASL) is disordered. One can recognise a Death domain in the interval 333–410 (QEEVEKLLSS…DIAESLYSES (78 aa)).

Homodimer; disulfide-linked. Heterodimer with SORCS2. The extracellular domains of the heterodimer bind NGF. N- and O-glycosylated. Post-translationally, phosphorylated on serine residues. As to expression, detected in embryonic dorsal root ganglion and retina.

It is found in the cell membrane. The protein resides in the perikaryon. It localises to the cell projection. The protein localises to the growth cone. Its subcellular location is the dendritic spine. Its function is as follows. Low affinity receptor which can bind to NGF, BDNF, NTF3, and NTF4. Forms a heterodimeric receptor with SORCS2 that binds the precursor forms of NGF, BDNF and NTF3 with high affinity, and has much lower affinity for mature NGF and BDNF. Plays an important role in differentiation and survival of specific neuronal populations during development. Can mediate cell survival as well as cell death of neural cells. Plays a role in the inactivation of RHOA. Necessary for the circadian oscillation of clock genes in the suprachiasmatic nucleus (SCmgetaN) of the brain and in liver and of the genes involved in glucose and lipid metabolism in the liver. The polypeptide is Tumor necrosis factor receptor superfamily member 16 (NGFR) (Gallus gallus (Chicken)).